A 406-amino-acid chain; its full sequence is Argininosuccinate synthase (406 aa).

Residues 10 to 18 (AYSGGLDTS) and Ala37 each bind ATP. Positions 88 and 93 each coordinate L-citrulline. Gly118 is an ATP binding site. Residues Thr120, Asn124, and Asp125 each coordinate L-aspartate. Position 124 (Asn124) interacts with L-citrulline. The L-citrulline site is built by Arg128, Ser180, Ser189, Glu265, and Tyr277.

It belongs to the argininosuccinate synthase family. Type 1 subfamily. As to quaternary structure, homotetramer.

The protein localises to the cytoplasm. The catalysed reaction is L-citrulline + L-aspartate + ATP = 2-(N(omega)-L-arginino)succinate + AMP + diphosphate + H(+). The protein operates within amino-acid biosynthesis; L-arginine biosynthesis; L-arginine from L-ornithine and carbamoyl phosphate: step 2/3. This Methylobacillus flagellatus (strain ATCC 51484 / DSM 6875 / VKM B-1610 / KT) protein is Argininosuccinate synthase.